Here is a 515-residue protein sequence, read N- to C-terminus: Hopanoid C-3 methylase (515 aa).

Positions 8-141 constitute a B12-binding domain; that stretch reads PSPLMYTKVF…ETLARRGNID (134 aa). The region spanning 181–395 is the Radical SAM core domain; the sequence is GTLDPCASIE…DIQHAVLPTR (215 aa). [4Fe-4S] cluster-binding residues include Cys195, Cys199, and Cys202.

This sequence belongs to the radical SAM superfamily. It depends on [4Fe-4S] cluster as a cofactor.

Its function is as follows. Required for methylation of hopanoids at the C-3 position. The chain is Hopanoid C-3 methylase from Methylococcus capsulatus (strain ATCC 33009 / NCIMB 11132 / Bath).